We begin with the raw amino-acid sequence, 130 residues long: Mediator of RNA polymerase II transcription subunit 31 (130 aa).

It belongs to the Mediator complex subunit 31 family. Component of the Mediator complex.

It localises to the nucleus. Component of the Mediator complex, a coactivator involved in the regulated transcription of nearly all RNA polymerase II-dependent genes. Mediator functions as a bridge to convey information from gene-specific regulatory proteins to the basal RNA polymerase II transcription machinery. Mediator is recruited to promoters by direct interactions with regulatory proteins and serves as a scaffold for the assembly of a functional preinitiation complex with RNA polymerase II and the general transcription factors. This Candida glabrata (strain ATCC 2001 / BCRC 20586 / JCM 3761 / NBRC 0622 / NRRL Y-65 / CBS 138) (Yeast) protein is Mediator of RNA polymerase II transcription subunit 31 (SOH1).